The following is a 636-amino-acid chain: 1-deoxy-D-xylulose-5-phosphate synthase (636 aa).

Residues histidine 74 and 115–117 (GHA) each bind thiamine diphosphate. Mg(2+) is bound at residue aspartate 146. Thiamine diphosphate is bound by residues 147 to 148 (GA), asparagine 175, tyrosine 285, and glutamate 368. Residue asparagine 175 coordinates Mg(2+).

This sequence belongs to the transketolase family. DXPS subfamily. Homodimer. It depends on Mg(2+) as a cofactor. Thiamine diphosphate serves as cofactor.

The enzyme catalyses D-glyceraldehyde 3-phosphate + pyruvate + H(+) = 1-deoxy-D-xylulose 5-phosphate + CO2. It functions in the pathway metabolic intermediate biosynthesis; 1-deoxy-D-xylulose 5-phosphate biosynthesis; 1-deoxy-D-xylulose 5-phosphate from D-glyceraldehyde 3-phosphate and pyruvate: step 1/1. Its function is as follows. Catalyzes the acyloin condensation reaction between C atoms 2 and 3 of pyruvate and glyceraldehyde 3-phosphate to yield 1-deoxy-D-xylulose-5-phosphate (DXP). In Anaeromyxobacter sp. (strain K), this protein is 1-deoxy-D-xylulose-5-phosphate synthase.